Here is a 338-residue protein sequence, read N- to C-terminus: MNLQKFPRYPLTFGPTPIQPLKRLSAHLGGKVELYAKRDDCNSGLAFGGNKTRKLEYLIPDALAQGCDTLVSIGGIQSNQTRQVAAVAAHLGMKCVLVQENWVNYHDAVYDRVGNIQMSRMMGADVRLVPDGFDIGFRKSWEDALADVRARGGKPYAIPAGCSDHPLGGLGFVGFAEEVRAQEAELGFKFDYVVVCSVTGSTQAGMVVGFAADGRADRVIGIDASAKPAQTREQILRIARNTADRVELGRDIASGDVVLDERFGGPEYGLPNEGTLEAIRLCAKLEGVLTDPVYEGKSMHGMIEKVRLGEFPAGSKVLYAHLGGVPALNAYSFLFRDG.

Lys51 is modified (N6-(pyridoxal phosphate)lysine). Ser78 functions as the Nucleophile in the catalytic mechanism.

Belongs to the ACC deaminase/D-cysteine desulfhydrase family. Homotrimer. Pyridoxal 5'-phosphate serves as cofactor.

The catalysed reaction is 1-aminocyclopropane-1-carboxylate + H2O = 2-oxobutanoate + NH4(+). Functionally, catalyzes a cyclopropane ring-opening reaction, the irreversible conversion of 1-aminocyclopropane-1-carboxylate (ACC) to ammonia and alpha-ketobutyrate. Allows growth on ACC as a nitrogen source. This chain is 1-aminocyclopropane-1-carboxylate deaminase, found in Burkholderia thailandensis (strain ATCC 700388 / DSM 13276 / CCUG 48851 / CIP 106301 / E264).